A 273-amino-acid polypeptide reads, in one-letter code: Dermonecrotic toxin LdSicTox-alphaIB1avi (273 aa).

Residue histidine 5 is part of the active site. Mg(2+) contacts are provided by glutamate 25 and aspartate 27. The Nucleophile role is filled by histidine 41. 2 cysteine pairs are disulfide-bonded: cysteine 45–cysteine 51 and cysteine 47–cysteine 190. Residue aspartate 85 participates in Mg(2+) binding. Residue asparagine 250 is glycosylated (N-linked (GlcNAc...) asparagine).

The protein belongs to the arthropod phospholipase D family. Class II subfamily. Requires Mg(2+) as cofactor. As to expression, expressed by the venom gland.

The protein localises to the secreted. The catalysed reaction is an N-(acyl)-sphingosylphosphocholine = an N-(acyl)-sphingosyl-1,3-cyclic phosphate + choline. It carries out the reaction an N-(acyl)-sphingosylphosphoethanolamine = an N-(acyl)-sphingosyl-1,3-cyclic phosphate + ethanolamine. It catalyses the reaction a 1-acyl-sn-glycero-3-phosphocholine = a 1-acyl-sn-glycero-2,3-cyclic phosphate + choline. The enzyme catalyses a 1-acyl-sn-glycero-3-phosphoethanolamine = a 1-acyl-sn-glycero-2,3-cyclic phosphate + ethanolamine. In terms of biological role, dermonecrotic toxins cleave the phosphodiester linkage between the phosphate and headgroup of certain phospholipids (sphingolipid and lysolipid substrates), forming an alcohol (often choline) and a cyclic phosphate. This toxin acts on sphingomyelin (SM). It may also act on ceramide phosphoethanolamine (CPE), lysophosphatidylcholine (LPC) and lysophosphatidylethanolamine (LPE), but not on lysophosphatidylserine (LPS), and lysophosphatidylglycerol (LPG). It acts by transphosphatidylation, releasing exclusively cyclic phosphate products as second products. Induces dermonecrosis, hemolysis, increased vascular permeability, edema, inflammatory response, and platelet aggregation. The sequence is that of Dermonecrotic toxin LdSicTox-alphaIB1avi from Loxosceles deserta (Desert recluse spider).